The primary structure comprises 408 residues: Lysosomal phospholipase A and acyltransferase (408 aa).

The signal sequence occupies residues 1 to 31; the sequence is MGLRRGPCPAALLPGGFLFLLLLADPALLAG. Asp42 lines the substrate pocket. Cysteines 61 and 85 form a disulfide. N-linked (GlcNAc...) asparagine glycosylation occurs at Asn95. The Acyl-ester intermediate role is filled by Ser194. Residue Ser194 participates in Zn(2+) binding. Met195 contacts substrate. Asn269 and Asn285 each carry an N-linked (GlcNAc...) asparagine glycan. Positions 336 and 351 each coordinate Zn(2+). Active-site charge relay system residues include Asp356 and His388. His388 contacts Zn(2+). A glycan (N-linked (GlcNAc...) asparagine) is linked at Asn394.

It belongs to the AB hydrolase superfamily. Lipase family. N-glycosylated. N-glycosylation is important for maturation of the enzyme and normal subcellular location.

The protein resides in the secreted. It is found in the lysosome. Its subcellular location is the membrane. It catalyses the reaction a 1,2-diacyl-sn-glycero-3-phosphocholine + H2O = a 2-acyl-sn-glycero-3-phosphocholine + a fatty acid + H(+). It carries out the reaction 1-hexadecanoyl-2-(9Z-octadecenoyl)-sn-glycero-3-phosphocholine + H2O = 2-(9Z-octadecenoyl)-sn-glycero-3-phosphocholine + hexadecanoate + H(+). The enzyme catalyses 1,2-di-(9Z-octadecenoyl)-sn-glycero-3-phosphocholine + H2O = 2-(9Z-octadecenoyl)-sn-glycero-3-phosphocholine + (9Z)-octadecenoate + H(+). The catalysed reaction is 1-hexadecanoyl-2-glutaroyl-sn-glycero-3-phosphocholine + H2O = 2-glutaroyl-sn-glycero-3-phosphocholine + hexadecanoate + H(+). It catalyses the reaction 1-hexadecanoyl-2-nonadioyl-sn-glycero-3-phosphocholine + H2O = 2-nonadioyl-sn-glycero-3-phosphocholine + hexadecanoate + H(+). It carries out the reaction 1-hexadecanoyl-2-(5-oxopentanoyl)-sn-glycero-3-phosphocholine + H2O = 2-(5-oxopentanoyl)-sn-glycero-3-phosphocholine + hexadecanoate + H(+). The enzyme catalyses 1-hexadecanoyl-2-(9-oxononanoyl)-sn-glycero-3-phosphocholine + H2O = 2-(9-oxononanoyl)-sn-glycero-3-phosphocholine + hexadecanoate + H(+). The catalysed reaction is 1,2-dihexadecanoyl-sn-glycero-3-phosphocholine + H2O = 2-hexadecanoyl-sn-glycero-3-phosphocholine + hexadecanoate + H(+). It catalyses the reaction a 1,2-diacyl-sn-glycero-3-phosphocholine + H2O = a 1-acyl-sn-glycero-3-phosphocholine + a fatty acid + H(+). It carries out the reaction 1-hexadecanoyl-2-(9Z-octadecenoyl)-sn-glycero-3-phosphocholine + H2O = 1-hexadecanoyl-sn-glycero-3-phosphocholine + (9Z)-octadecenoate + H(+). The enzyme catalyses 1,2-di-(9Z-octadecenoyl)-sn-glycero-3-phosphocholine + H2O = 1-(9Z-octadecenoyl)-sn-glycero-3-phosphocholine + (9Z)-octadecenoate + H(+). The catalysed reaction is 1,2-dihexadecanoyl-sn-glycero-3-phosphocholine + H2O = 1-hexadecanoyl-sn-glycero-3-phosphocholine + hexadecanoate + H(+). It catalyses the reaction a 1-acyl-sn-glycero-3-phosphocholine + H2O = sn-glycerol 3-phosphocholine + a fatty acid + H(+). It carries out the reaction 1-hexadecanoyl-sn-glycero-3-phosphocholine + H2O = sn-glycerol 3-phosphocholine + hexadecanoate + H(+). The enzyme catalyses N-(acetyl)-sphing-4-enine + a 1,2-diacyl-sn-glycero-3-phosphoethanolamine = 1-O-acyl-N-(acetyl)-sphing-4-enine + a 2-acyl-sn-glycero-3-phosphoethanolamine. The catalysed reaction is 1-hexadecanoyl-2-(9Z-octadecenoyl)-sn-glycero-3-phosphoethanolamine + N-(acetyl)-sphing-4-enine = 2-(9Z-octadecenoyl)-sn-glycero-3-phosphoethanolamine + 1-hexadecanoyl-N-(acetyl)-sphing-4-enine. It catalyses the reaction 1-hexadecanoyl-2-(9Z,12Z-octadecadienoyl)-sn-glycero-3-phosphoethanolamine + N-(acetyl)-sphing-4-enine = 2-(9Z,12Z)-octadecadienoyl-sn-glycero-3-phosphoethanolamine + 1-hexadecanoyl-N-(acetyl)-sphing-4-enine. It carries out the reaction 1-hexadecanoyl-2-(5Z,8Z,11Z,14Z-eicosatetraenoyl)-sn-glycero-3-phosphoethanolamine + N-(acetyl)-sphing-4-enine = 2-(5Z,8Z,11Z,14Z)-eicosatetraenoyl-sn-glycero-3-phosphoethanolamine + 1-hexadecanoyl-N-(acetyl)-sphing-4-enine. The enzyme catalyses N-(acetyl)-sphing-4-enine + a 1,2-diacyl-sn-glycero-3-phosphoethanolamine = 1-O-acyl-N-(acetyl)-sphing-4-enine + a 1-acyl-sn-glycero-3-phosphoethanolamine. The catalysed reaction is 1-hexadecanoyl-2-(9Z-octadecenoyl)-sn-glycero-3-phosphoethanolamine + N-(acetyl)-sphing-4-enine = 1-(9Z-octadecenoyl)-N-(acetyl)-sphing-4-enine + 1-hexadecanoyl-sn-glycero-3-phosphoethanolamine. It catalyses the reaction 1-hexadecanoyl-2-(9Z,12Z-octadecadienoyl)-sn-glycero-3-phosphoethanolamine + N-(acetyl)-sphing-4-enine = 1-(9Z,12Z-octadecadienoyl)-N-acetylsphing-4-enine + 1-hexadecanoyl-sn-glycero-3-phosphoethanolamine. It carries out the reaction 1-hexadecanoyl-2-(5Z,8Z,11Z,14Z-eicosatetraenoyl)-sn-glycero-3-phosphoethanolamine + N-(acetyl)-sphing-4-enine = 1-(5Z,8Z,11Z,14Z)-eicosatetraenoyl-N-(acetyl)-sphing-4-enine + 1-hexadecanoyl-sn-glycero-3-phosphoethanolamine. The enzyme catalyses N-(acetyl)-sphing-4-enine + a 1,2-diacyl-sn-glycero-3-phosphocholine = 1-O-acyl-N-(acetyl)-sphing-4-enine + a 2-acyl-sn-glycero-3-phosphocholine. The catalysed reaction is 1-hexadecanoyl-2-(9Z-octadecenoyl)-sn-glycero-3-phosphocholine + N-(acetyl)-sphing-4-enine = 1-hexadecanoyl-N-(acetyl)-sphing-4-enine + 2-(9Z-octadecenoyl)-sn-glycero-3-phosphocholine. It catalyses the reaction 1-hexadecanoyl-2-(9Z,12Z-octadecadienoyl)-sn-glycero-3-phosphocholine + N-(acetyl)-sphing-4-enine = 2-(9Z,12Z-octadecadienoyl)-sn-glycero-3-phosphocholine + 1-hexadecanoyl-N-(acetyl)-sphing-4-enine. It carries out the reaction 1-hexadecanoyl-2-(5Z,8Z,11Z,14Z-eicosatetraenoyl)-sn-glycero-3-phosphocholine + N-(acetyl)-sphing-4-enine = 1-hexadecanoyl-N-(acetyl)-sphing-4-enine + 2-(5Z,8Z,11Z,14Z)-eicosatetraenoyl-sn-glycero-3-phosphocholine. The enzyme catalyses 1-hexadecanoyl-2-(4Z,7Z,10Z,13Z,16Z,19Z-docosahexaenoyl)-sn-glycero-3-phosphocholine + N-(acetyl)-sphing-4-enine = 2-(4Z,7Z,10Z,13Z,16Z,19Z-docosahexaenoyl)-sn-glycero-3-phosphocholine + 1-hexadecanoyl-N-(acetyl)-sphing-4-enine. The catalysed reaction is 1-hexadecanoyl-2-nonadioyl-sn-glycero-3-phosphocholine + N-(acetyl)-sphing-4-enine = 2-nonadioyl-sn-glycero-3-phosphocholine + 1-hexadecanoyl-N-(acetyl)-sphing-4-enine. It catalyses the reaction 1-octadecanoyl-2-(9Z-octadecenoyl)-sn-glycero-3-phosphocholine + N-(acetyl)-sphing-4-enine = 1-octadecanoyl-N-(acetyl)-sphing-4-enine + 2-(9Z-octadecenoyl)-sn-glycero-3-phosphocholine. It carries out the reaction 1-(9Z)-octadecenoyl-2-octadecanoyl-sn-glycero-3-phosphocholine + N-(acetyl)-sphing-4-enine = 2-octadecanoyl-sn-glycero-3-phosphocholine + 1-(9Z-octadecenoyl)-N-(acetyl)-sphing-4-enine. The enzyme catalyses 1-octadecanoyl-2-(5Z,8Z,11Z,14Z-eicosatetraenoyl)-sn-glycero-3-phosphocholine + N-(acetyl)-sphing-4-enine = 1-octadecanoyl-N-(acetyl)-sphing-4-enine + 2-(5Z,8Z,11Z,14Z)-eicosatetraenoyl-sn-glycero-3-phosphocholine. The catalysed reaction is 1-(9Z-octadecenoyl)-2-hexadecanoyl-sn-glycero-3-phosphocholine + N-(acetyl)-sphing-4-enine = 1-(9Z-octadecenoyl)-N-(acetyl)-sphing-4-enine + 2-hexadecanoyl-sn-glycero-3-phosphocholine. It catalyses the reaction N-(acetyl)-sphing-4-enine + a 1,2-diacyl-sn-glycero-3-phosphocholine = 1-O-acyl-N-(acetyl)-sphing-4-enine + a 1-acyl-sn-glycero-3-phosphocholine. It carries out the reaction 1-hexadecanoyl-2-(9Z-octadecenoyl)-sn-glycero-3-phosphocholine + N-(acetyl)-sphing-4-enine = 1-(9Z-octadecenoyl)-N-(acetyl)-sphing-4-enine + 1-hexadecanoyl-sn-glycero-3-phosphocholine. The enzyme catalyses 1-hexadecanoyl-2-(9Z,12Z-octadecadienoyl)-sn-glycero-3-phosphocholine + N-(acetyl)-sphing-4-enine = 1-(9Z,12Z-octadecadienoyl)-N-acetylsphing-4-enine + 1-hexadecanoyl-sn-glycero-3-phosphocholine. The catalysed reaction is 1-hexadecanoyl-2-(5Z,8Z,11Z,14Z-eicosatetraenoyl)-sn-glycero-3-phosphocholine + N-(acetyl)-sphing-4-enine = 1-(5Z,8Z,11Z,14Z)-eicosatetraenoyl-N-(acetyl)-sphing-4-enine + 1-hexadecanoyl-sn-glycero-3-phosphocholine. It catalyses the reaction 1-hexadecanoyl-2-(4Z,7Z,10Z,13Z,16Z,19Z-docosahexaenoyl)-sn-glycero-3-phosphocholine + N-(acetyl)-sphing-4-enine = 1-(4Z,7Z,10Z,13Z,16Z,19Z-docosahexaenoyl)-N-(acetyl)-sphing-4-enine + 1-hexadecanoyl-sn-glycero-3-phosphocholine. It carries out the reaction 1-octadecanoyl-2-(9Z-octadecenoyl)-sn-glycero-3-phosphocholine + N-(acetyl)-sphing-4-enine = 1-(9Z-octadecenoyl)-N-(acetyl)-sphing-4-enine + 1-octadecanoyl-sn-glycero-3-phosphocholine. The enzyme catalyses 1-octadecanoyl-2-(9Z,12Z)-octadecadienoyl-sn-glycero-3-phosphocholine + N-(acetyl)-sphing-4-enine = 1-(9Z,12Z-octadecadienoyl)-N-acetylsphing-4-enine + 1-octadecanoyl-sn-glycero-3-phosphocholine. The catalysed reaction is 1-(9Z-octadecenoyl)-2-hexadecanoyl-sn-glycero-3-phosphocholine + N-(acetyl)-sphing-4-enine = 1-hexadecanoyl-N-(acetyl)-sphing-4-enine + 1-(9Z-octadecenoyl)-sn-glycero-3-phosphocholine. It catalyses the reaction 1-(9Z)-octadecenoyl-2-octadecanoyl-sn-glycero-3-phosphocholine + N-(acetyl)-sphing-4-enine = 1-octadecanoyl-N-(acetyl)-sphing-4-enine + 1-(9Z-octadecenoyl)-sn-glycero-3-phosphocholine. It carries out the reaction 1,2-di-(9Z-octadecenoyl)-sn-glycero-3-phosphocholine + N-(acetyl)-sphing-4-enine = 1-(9Z-octadecenoyl)-N-(acetyl)-sphing-4-enine + 1-(9Z-octadecenoyl)-sn-glycero-3-phosphocholine. The enzyme catalyses 1-octadecanoyl-2-(5Z,8Z,11Z,14Z-eicosatetraenoyl)-sn-glycero-3-phosphocholine + N-(acetyl)-sphing-4-enine = 1-(5Z,8Z,11Z,14Z)-eicosatetraenoyl-N-(acetyl)-sphing-4-enine + 1-octadecanoyl-sn-glycero-3-phosphocholine. The catalysed reaction is a 1,2-diacyl-sn-glycero-3-phospho-L-serine + N-(acetyl)-sphing-4-enine = a 2-acyl-sn-glycero-3-phospho-L-serine + 1-O-acyl-N-(acetyl)-sphing-4-enine. It catalyses the reaction 1-octadecanoyl-2-(9Z-octadecenoyl)-sn-glycero-3-phospho-L-serine + N-(acetyl)-sphing-4-enine = 2-(9Z-octadecenoyl)-sn-glycero-3-phospho-L-serine + 1-octadecanoyl-N-(acetyl)-sphing-4-enine. It carries out the reaction a 1,2-diacyl-sn-glycero-3-phospho-L-serine + N-(acetyl)-sphing-4-enine = 1-O-acyl-N-(acetyl)-sphing-4-enine + a 1-acyl-sn-glycero-3-phospho-L-serine. The enzyme catalyses 1-octadecanoyl-2-(9Z-octadecenoyl)-sn-glycero-3-phospho-L-serine + N-(acetyl)-sphing-4-enine = 1-octadecanoyl-sn-glycero-3-phosphoserine + 1-(9Z-octadecenoyl)-N-(acetyl)-sphing-4-enine. The catalysed reaction is a 1,2-diacyl-sn-glycero-3-phospho-(1'-sn-glycerol) + N-(acetyl)-sphing-4-enine = 2-acyl-sn-glycero-3-phospho-(1'-sn-glycerol) + 1-O-acyl-N-(acetyl)-sphing-4-enine. It catalyses the reaction 1-octadecanoyl-2-(9Z-octadecenoyl)-sn-glycero-3-phospho-(1'-sn-glycerol) + N-(acetyl)-sphing-4-enine = 2-(9Z-octadecenoyl)-sn-glycero-3-phospho-(1'-sn-glycerol) + 1-octadecanoyl-N-(acetyl)-sphing-4-enine. It carries out the reaction a 1,2-diacyl-sn-glycero-3-phospho-(1'-sn-glycerol) + N-(acetyl)-sphing-4-enine = 1-O-acyl-N-(acetyl)-sphing-4-enine + 1-acyl-sn-glycero-3-phospho-(1'-sn-glycerol). The enzyme catalyses 1-octadecanoyl-2-(9Z-octadecenoyl)-sn-glycero-3-phospho-(1'-sn-glycerol) + N-(acetyl)-sphing-4-enine = 1-octadecanoyl-sn-glycero-3-phospho-(1'-sn-glycerol) + 1-(9Z-octadecenoyl)-N-(acetyl)-sphing-4-enine. The catalysed reaction is an N-acylethanolamine + a 1,2-diacyl-sn-glycero-3-phosphocholine = 2-(acylamino)ethyl fatty acid + a 2-acyl-sn-glycero-3-phosphocholine. It catalyses the reaction an N-acylethanolamine + a 1,2-diacyl-sn-glycero-3-phosphocholine = 2-(acylamino)ethyl fatty acid + a 1-acyl-sn-glycero-3-phosphocholine. It carries out the reaction N-(5Z,8Z,11Z,14Z-eicosatetraenoyl)-ethanolamine + 1,2-di-(9Z-octadecenoyl)-sn-glycero-3-phosphocholine = 2-[(5Z,8Z,11Z,14Z)-eicosatetraenoylamino]ethyl (9Z)-octadecenoate + (9Z-octadecenoyl)-sn-glycero-3-phosphocholine. The enzyme catalyses N-(9Z-octadecenoyl) ethanolamine + 1,2-di-(9Z-octadecenoyl)-sn-glycero-3-phosphocholine = 2-[(9Z)-octadecenoylamino]ethyl (9Z)-octadecenoate + (9Z-octadecenoyl)-sn-glycero-3-phosphocholine. The catalysed reaction is a 3-acyl-sn-glycerol + a 1,2-diacyl-sn-glycero-3-phosphocholine = a 1,3-diacylglycerol + a 1-acyl-sn-glycero-3-phosphocholine. It catalyses the reaction a 3-acyl-sn-glycerol + a 1,2-diacyl-sn-glycero-3-phosphocholine = a 1,3-diacylglycerol + a 2-acyl-sn-glycero-3-phosphocholine. It carries out the reaction 3-(9Z-octadecenoyl)-sn-glycerol + 1,2-di-(9Z-octadecenoyl)-sn-glycero-3-phosphocholine = 1,3-di-(9Z-octadecenoyl)-glycerol + (9Z-octadecenoyl)-sn-glycero-3-phosphocholine. The enzyme catalyses 3-hexadecanoyl-sn-glycerol + 1,2-di-(9Z-octadecenoyl)-sn-glycero-3-phosphocholine = 1-(9Z)-octadecenoyl-3-hexadecanoyl-sn-glycerol + (9Z-octadecenoyl)-sn-glycero-3-phosphocholine. The catalysed reaction is a 1-acyl-sn-glycerol + a 1,2-diacyl-sn-glycero-3-phosphocholine = a 1,3-diacylglycerol + a 2-acyl-sn-glycero-3-phosphocholine. It catalyses the reaction a 1-acyl-sn-glycerol + a 1,2-diacyl-sn-glycero-3-phosphocholine = a 1,3-diacylglycerol + a 1-acyl-sn-glycero-3-phosphocholine. It carries out the reaction 1-(9Z-octadecenoyl)-sn-glycerol + 1,2-di-(9Z-octadecenoyl)-sn-glycero-3-phosphocholine = 1,3-di-(9Z-octadecenoyl)-glycerol + (9Z-octadecenoyl)-sn-glycero-3-phosphocholine. The enzyme catalyses 1-hexadecanoyl-sn-glycerol + 1,2-di-(9Z-octadecenoyl)-sn-glycero-3-phosphocholine = 1-hexadecanoyl-3-(9Z)-octadecenoyl-sn-glycerol + (9Z-octadecenoyl)-sn-glycero-3-phosphocholine. The catalysed reaction is a 2-acylglycerol + a 1,2-diacyl-sn-glycero-3-phosphocholine = a 1,2-diacylglycerol + a 2-acyl-sn-glycero-3-phosphocholine. It catalyses the reaction a 2-acylglycerol + a 1,2-diacyl-sn-glycero-3-phosphocholine = a 1,2-diacylglycerol + a 1-acyl-sn-glycero-3-phosphocholine. It carries out the reaction 2-hexadecanoylglycerol + 1,2-di-(9Z-octadecenoyl)-sn-glycero-3-phosphocholine = 1-(9Z)-octadecenoyl-2-hexadecanoylglycerol + (9Z-octadecenoyl)-sn-glycero-3-phosphocholine. The enzyme catalyses 1-O-alkylglycerol + a 1,2-diacyl-sn-glycero-3-phosphocholine = 1-O-alkyl-3-acylglycerol + a 1-acyl-sn-glycero-3-phosphocholine. The catalysed reaction is 1-O-alkylglycerol + a 1,2-diacyl-sn-glycero-3-phosphocholine = 1-O-alkyl-3-acylglycerol + a 2-acyl-sn-glycero-3-phosphocholine. It catalyses the reaction 1-O-hexadecylglycerol + 1,2-di-(9Z-octadecenoyl)-sn-glycero-3-phosphocholine = 1-O-hexadecyl-3-(9Z)-octadecenoylglycerol + (9Z-octadecenoyl)-sn-glycero-3-phosphocholine. It carries out the reaction 1-O-alkyl-2-acyl-sn-glycerol + a 1,2-diacyl-sn-glycero-3-phosphocholine = 1-O-alkyl-2,3-diacyl-sn-glycerol + a 2-acyl-sn-glycero-3-phosphocholine. The enzyme catalyses 1-O-alkyl-2-acyl-sn-glycerol + a 1,2-diacyl-sn-glycero-3-phosphocholine = 1-O-alkyl-2,3-diacyl-sn-glycerol + a 1-acyl-sn-glycero-3-phosphocholine. The catalysed reaction is 1-O-hexadecyl-2-acetyl-sn-glycerol + 1,2-di-(9Z-octadecenoyl)-sn-glycero-3-phosphocholine = 1-O-hexadecyl-2-acetyl-3-(9Z)-octadecenoyl-sn-glycerol + (9Z-octadecenoyl)-sn-glycero-3-phosphocholine. It catalyses the reaction 1-O-hexadecyl-2-O-methyl-sn-glycerol + 1,2-di-(9Z-octadecenoyl)-sn-glycero-3-phosphocholine = 1-O-hexadecyl-2-O-methyl-3-(9Z)-octadecenoyl-sn-glycerol + (9Z-octadecenoyl)-sn-glycero-3-phosphocholine. It carries out the reaction a 1,2-diacyl-sn-glycero-3-phosphoethanolamine + H2O = a 1-acyl-sn-glycero-3-phosphoethanolamine + a fatty acid + H(+). The enzyme catalyses 1-acyl-2-(5Z,8Z,11Z,14Z)-eicosatetraenoyl-sn-glycero-3-phosphoethanolamine + H2O = a 1-acyl-sn-glycero-3-phosphoethanolamine + (5Z,8Z,11Z,14Z)-eicosatetraenoate + H(+). The catalysed reaction is a 1,2-diacyl-sn-glycero-3-phospho-(1'-sn-glycerol) + H2O = 1-acyl-sn-glycero-3-phospho-(1'-sn-glycerol) + a fatty acid + H(+). It catalyses the reaction 1-hexadecanoyl-2-(9Z-octadecenoyl)-sn-glycero-3-phospho-(1'-sn-glycerol) + H2O = 1-hexadecanoyl-sn-glycero-3-phospho-(1'-sn-glycerol) + (9Z)-octadecenoate + H(+). It carries out the reaction a 1,2-diacyl-sn-glycero-3-phospho-(1'-sn-glycerol) + H2O = 2-acyl-sn-glycero-3-phospho-(1'-sn-glycerol) + a fatty acid + H(+). The enzyme catalyses 1-hexadecanoyl-2-(9Z-octadecenoyl)-sn-glycero-3-phospho-(1'-sn-glycerol) + H2O = 2-(9Z-octadecenoyl)-sn-glycero-3-phospho-(1'-sn-glycerol) + hexadecanoate + H(+). Its function is as follows. Has dual calcium-independent phospholipase and O-acyltransferase activities with a potential role in glycerophospholipid homeostasis and remodeling of acyl groups of lipophilic alcohols present in acidic cellular compartments. Catalyzes hydrolysis of the ester bond of the fatty acyl group attached at sn-1 or sn-2 position of phospholipids (phospholipase A1 or A2 activity) and transfer it to the hydroxyl group at the first carbon of lipophilic alcohols (O-acyltransferase activity). Among preferred fatty acyl donors are phosphatidylcholines, phosphatidylethanolamines, phosphatidylglycerols and phosphatidylserines. Favors sn-2 over sn-1 deacylation of unsaturated fatty acyl groups of phosphatidylcholines, phosphatidylethanolamines, and phosphatidylglycerols. Among preferred fatty acyl acceptors are natural lipophilic alcohols including short-chain ceramide N-acetyl-sphingosine (C2 ceramide), alkylacylglycerols, monoacylglycerols, and acylethanolamides such as anandamide and oleoylethanolamide. Selectively hydrolyzes the sn-1 fatty acyl group of truncated oxidized phospholipids and may play a role in detoxification of reactive oxidized phospholipids during oxidative stress. Required for normal phospholipid degradation in alveolar macrophages with potential implications in the clearance of pulmonary surfactant, which is mainly composed of dipalmitoylphosphatidylcholine (1,2-dihexadecanoyl-sn-glycero-3-phosphocholine). Involved in the first step of bis(monoacylglycero)phosphate (BMP) de novo synthesis from phosphatidylglycerol (1,2-diacyl-sn-glycero-3-phospho-(1'-sn-glycerol), PG). BMP is an important player in cargo sorting and degradation, regulation of cellular cholesterol levels and intercellular communication. At neutral pH, hydrolyzes the sn-1 fatty acyl group of the lysophosphatidylcholines. This is Lysosomal phospholipase A and acyltransferase (PLA2G15) from Canis lupus familiaris (Dog).